Here is a 258-residue protein sequence, read N- to C-terminus: Isoprenyl transferase (258 aa).

D38 is a catalytic residue. D38 provides a ligand contact to Mg(2+). Residues 39–42 (GNGR), W43, R51, H55, and 83–85 (STE) contribute to the substrate site. N86 serves as the catalytic Proton acceptor. Substrate-binding positions include W87, R89, R206, and 212-214 (RIS). E225 provides a ligand contact to Mg(2+).

The protein belongs to the UPP synthase family. Homodimer. The cofactor is Mg(2+).

Its function is as follows. Catalyzes the condensation of isopentenyl diphosphate (IPP) with allylic pyrophosphates generating different type of terpenoids. This chain is Isoprenyl transferase, found in Bacillus thuringiensis subsp. konkukian (strain 97-27).